Reading from the N-terminus, the 388-residue chain is Chalcone synthase LF3 (388 aa).

Residue C164 is part of the active site.

This sequence belongs to the thiolase-like superfamily. Chalcone/stilbene synthases family.

It carries out the reaction (E)-4-coumaroyl-CoA + 3 malonyl-CoA + 3 H(+) = 2',4,4',6'-tetrahydroxychalcone + 3 CO2 + 4 CoA. It functions in the pathway secondary metabolite biosynthesis; flavonoid biosynthesis. The primary product of this enzyme is 4,2',4',6'-tetrahydroxychalcone (also termed naringenin-chalcone or chalcone) which can under specific conditions spontaneously isomerize into naringenin. The sequence is that of Chalcone synthase LF3 (CHS-LF3) from Ipomoea batatas (Sweet potato).